Consider the following 157-residue polypeptide: Ribosomal RNA large subunit methyltransferase H (157 aa).

S-adenosyl-L-methionine contacts are provided by residues L73, G104, and 123–128 (LGPLTL).

It belongs to the RNA methyltransferase RlmH family. As to quaternary structure, homodimer.

Its subcellular location is the cytoplasm. It catalyses the reaction pseudouridine(1915) in 23S rRNA + S-adenosyl-L-methionine = N(3)-methylpseudouridine(1915) in 23S rRNA + S-adenosyl-L-homocysteine + H(+). In terms of biological role, specifically methylates the pseudouridine at position 1915 (m3Psi1915) in 23S rRNA. This chain is Ribosomal RNA large subunit methyltransferase H, found in Xylella fastidiosa (strain M12).